The primary structure comprises 313 residues: Cytochrome c oxidase assembly protein COX18, mitochondrial (313 aa).

A helical membrane pass occupies residues 209–229 (SLPLDAAPMLIPIILGTVSMI). The Mitochondrial matrix portion of the chain corresponds to 230 to 272 (NVEYNGKTMQATAVGTSGITTATDTQSRTSQTVNSILTATRLS). A helical transmembrane segment spans residues 273–293 (TIFLIGVSTQASVLLSLYWIT). The Mitochondrial intermembrane segment spans residues 294–313 (SQVYSLIQNRILDLLWPYQR).

The protein belongs to the OXA1/ALB3/YidC family.

The protein localises to the mitochondrion inner membrane. Functionally, required for the insertion of integral membrane proteins into the mitochondrial inner membrane. Essential for the activity and assembly of cytochrome c oxidase. In Kluyveromyces lactis (strain ATCC 8585 / CBS 2359 / DSM 70799 / NBRC 1267 / NRRL Y-1140 / WM37) (Yeast), this protein is Cytochrome c oxidase assembly protein COX18, mitochondrial (COX18).